We begin with the raw amino-acid sequence, 316 residues long: Probable porphobilinogen deaminase (316 aa).

C234 bears the S-(dipyrrolylmethanemethyl)cysteine mark.

The protein belongs to the HMBS family. Dipyrromethane serves as cofactor.

It catalyses the reaction 4 porphobilinogen + H2O = hydroxymethylbilane + 4 NH4(+). It functions in the pathway porphyrin-containing compound metabolism; protoporphyrin-IX biosynthesis; coproporphyrinogen-III from 5-aminolevulinate: step 2/4. In terms of biological role, tetrapolymerization of the monopyrrole PBG into the hydroxymethylbilane pre-uroporphyrinogen in several discrete steps. This chain is Probable porphobilinogen deaminase, found in Methanosarcina mazei (strain ATCC BAA-159 / DSM 3647 / Goe1 / Go1 / JCM 11833 / OCM 88) (Methanosarcina frisia).